We begin with the raw amino-acid sequence, 855 residues long: DNA mismatch repair protein MutS (855 aa).

ATP is bound at residue 613–620 (GPNMGGKS). Positions 795 to 816 (ETTSLPHEVPSQQSGKPASPMQ) are disordered. The span at 796 to 816 (TTSLPHEVPSQQSGKPASPMQ) shows a compositional bias: polar residues.

Belongs to the DNA mismatch repair MutS family.

In terms of biological role, this protein is involved in the repair of mismatches in DNA. It is possible that it carries out the mismatch recognition step. This protein has a weak ATPase activity. In Pseudomonas paraeruginosa (strain DSM 24068 / PA7) (Pseudomonas aeruginosa (strain PA7)), this protein is DNA mismatch repair protein MutS.